The primary structure comprises 150 residues: Large ribosomal subunit protein eL19 (150 aa).

Residues 56–90 (RGISSGRLKERKHKRRSKGEGRKHGSRKGKSGART) are disordered.

It belongs to the eukaryotic ribosomal protein eL19 family. In terms of assembly, part of the 50S ribosomal subunit.

Binds to the 23S rRNA. The polypeptide is Large ribosomal subunit protein eL19 (Sulfolobus acidocaldarius (strain ATCC 33909 / DSM 639 / JCM 8929 / NBRC 15157 / NCIMB 11770)).